Here is a 258-residue protein sequence, read N- to C-terminus: C1q-related factor (258 aa).

An N-terminal signal peptide occupies residues 1-16 (MLLVLVVLIPVLVSSG). A disordered region spans residues 39–117 (GPGAGARTDG…PGLPGAGGSG (79 aa)). The segment covering 67 to 77 (GPQGKPGRTGK) has biased composition (low complexity). Residues 67-115 (GPQGKPGRTGKPGPPGPPGDPGPPGPVGPPGEKGEPGKPGPPGLPGAGG) form the Collagen-like domain. Residues 78–95 (PGPPGPPGDPGPPGPVGP) are compositionally biased toward pro residues. The C1q domain occupies 125 to 258 (TTVPRVAFYA…TFSGFIIYSD (134 aa)).

As to quaternary structure, interacts with ADGRB3. Forms heterooligomers with C1QL4, when proteins are coexpressed; this interaction does not occur after secretion. In terms of tissue distribution, expressed in brainstem.

The protein resides in the secreted. In terms of biological role, may regulate the number of excitatory synapses that are formed on hippocampus neurons. Has no effect on inhibitory synapses. This Homo sapiens (Human) protein is C1q-related factor (C1QL1).